A 226-amino-acid chain; its full sequence is Ribonuclease 3 (226 aa).

Residues I2–G129 enclose the RNase III domain. E42 is a binding site for Mg(2+). D46 is an active-site residue. N115 and E118 together coordinate Mg(2+). E118 is an active-site residue. In terms of domain architecture, DRBM spans D154–D223.

Belongs to the ribonuclease III family. In terms of assembly, homodimer. Mg(2+) is required as a cofactor.

The protein localises to the cytoplasm. It catalyses the reaction Endonucleolytic cleavage to 5'-phosphomonoester.. Its function is as follows. Digests double-stranded RNA. Involved in the processing of primary rRNA transcript to yield the immediate precursors to the large and small rRNAs (23S and 16S). Processes some mRNAs, and tRNAs when they are encoded in the rRNA operon. Processes pre-crRNA and tracrRNA of type II CRISPR loci if present in the organism. In Ehrlichia canis (strain Jake), this protein is Ribonuclease 3.